Here is a 662-residue protein sequence, read N- to C-terminus: Chromosomal replication initiator protein DnaA (662 aa).

Residues 1-93 (MDDEQNVLAT…QVEGLGVRIA (93 aa)) form a domain I, interacts with DnaA modulators region. The tract at residues 93–322 (AAPATPTAER…STPAPANSSA (230 aa)) is domain II. Low complexity predominate over residues 96–105 (ATPTAERAAA). Positions 96–294 (ATPTAERAAA…SDGPVERDDE (199 aa)) are disordered. The span at 114–123 (SRPERPRGER) shows a compositional bias: basic and acidic residues. Residues 166 to 199 (PPAAEYTPAAEYTPAAEYTPAAEYSPEPEYTPAT) show a composition bias toward low complexity. Basic and acidic residues-rich tracts occupy residues 236-248 (TPRR…RRDA) and 261-290 (PGDR…GPVE). Residues 323–539 (SLNAKYTFET…GALIRVTAFA (217 aa)) are domain III, AAA+ region. Residues Gly367, Gly369, Lys370, and Thr371 each coordinate ATP. Residues 540–662 (SLNGQPLDLS…LTARIKQRSR (123 aa)) are domain IV, binds dsDNA.

This sequence belongs to the DnaA family. In terms of assembly, oligomerizes as a right-handed, spiral filament on DNA at oriC.

It is found in the cytoplasm. Its function is as follows. Plays an essential role in the initiation and regulation of chromosomal replication. ATP-DnaA binds to the origin of replication (oriC) to initiate formation of the DNA replication initiation complex once per cell cycle. Binds the DnaA box (a 9 base pair repeat at the origin) and separates the double-stranded (ds)DNA. Forms a right-handed helical filament on oriC DNA; dsDNA binds to the exterior of the filament while single-stranded (ss)DNA is stabiized in the filament's interior. The ATP-DnaA-oriC complex binds and stabilizes one strand of the AT-rich DNA unwinding element (DUE), permitting loading of DNA polymerase. After initiation quickly degrades to an ADP-DnaA complex that is not apt for DNA replication. Binds acidic phospholipids. The protein is Chromosomal replication initiator protein DnaA of Nocardia farcinica (strain IFM 10152).